We begin with the raw amino-acid sequence, 215 residues long: Protein FAM27D1 (215 aa).

A disordered region spans residues 74 to 172; sequence QPKTHTHTGM…RGTQADLSSR (99 aa). Over residues 87 to 108 the composition is skewed to basic and acidic residues; the sequence is THRERERNTQRLRDRERRENGR. Over residues 109 to 122 the composition is skewed to basic residues; that stretch reads HTHRHTHTLTHTHT. Basic and acidic residues-rich tracts occupy residues 123–139 and 149–162; these read HRDT…ETHT and SAHD…REQP. Residues 163–172 show a composition bias toward polar residues; that stretch reads RGTQADLSSR.

This sequence belongs to the FAM27 family.

This chain is Protein FAM27D1 (FAM27D1), found in Homo sapiens (Human).